The chain runs to 403 residues: Phosphoglycerate kinase (403 aa).

Residues 22–24 (DLN), Arg-37, 60–63 (HLGN), Arg-119, and Arg-152 each bind substrate. ATP is bound by residues Lys-202, Glu-325, and 355-358 (GGDT).

Belongs to the phosphoglycerate kinase family. Monomer.

It localises to the cytoplasm. It carries out the reaction (2R)-3-phosphoglycerate + ATP = (2R)-3-phospho-glyceroyl phosphate + ADP. It participates in carbohydrate degradation; glycolysis; pyruvate from D-glyceraldehyde 3-phosphate: step 2/5. The protein is Phosphoglycerate kinase of Orientia tsutsugamushi (strain Boryong) (Rickettsia tsutsugamushi).